Reading from the N-terminus, the 336-residue chain is MRIGILTSGGDCPGINATIRGVCKTAINHYGMEVIGIHSGFQGLLTKDIESFTDKSLSGLLNQGGTMLGTSREKPFKKGGVVSDVDKPALILQNIQEMGLDCVVCIGGNGTQKTAAKFAAMGVNIVSVPKTIDNDIWGTDISFGFDSAVSIATDAIDRLHSTASSHKRVMVIEVMGHKAGWIALYSGMAGGGDVILVPEIPYNIKNIGNTILERLKKGKPYSIVVVAEGILTDGRKRAAEYIAQEIEYETGIETRETVLGYIQRGGSPTPFDRNLSTRMGGHATELIANGQFGRMIALKGDDISSIPLEEVAGKLKLVTEDHDLVIQGRRMGICFG.

Residues Gly10, 72–73, and 108–111 each bind ATP; these read RE and GNGT. A Mg(2+)-binding site is contributed by Asn109. Substrate is bound by residues 131-133, Arg168, 175-177, Glu228, Arg255, and 261-264; these read TID, MGH, and YIQR. Residue Asp133 is the Proton acceptor of the active site.

This sequence belongs to the phosphofructokinase type A (PFKA) family. Mixed-substrate PFK group III subfamily. Homodimer or homotetramer. Mg(2+) serves as cofactor.

It localises to the cytoplasm. It catalyses the reaction beta-D-fructose 6-phosphate + ATP = beta-D-fructose 1,6-bisphosphate + ADP + H(+). It functions in the pathway carbohydrate degradation; glycolysis; D-glyceraldehyde 3-phosphate and glycerone phosphate from D-glucose: step 3/4. Its function is as follows. Catalyzes the phosphorylation of D-fructose 6-phosphate to fructose 1,6-bisphosphate by ATP, the first committing step of glycolysis. The polypeptide is ATP-dependent 6-phosphofructokinase 3 (Bacteroides thetaiotaomicron (strain ATCC 29148 / DSM 2079 / JCM 5827 / CCUG 10774 / NCTC 10582 / VPI-5482 / E50)).